The chain runs to 369 residues: DNA replication and repair protein RecF (369 aa).

Residue 30–37 (GPNGSGKT) participates in ATP binding.

Belongs to the RecF family.

It localises to the cytoplasm. The RecF protein is involved in DNA metabolism; it is required for DNA replication and normal SOS inducibility. RecF binds preferentially to single-stranded, linear DNA. It also seems to bind ATP. This Chlorobium luteolum (strain DSM 273 / BCRC 81028 / 2530) (Pelodictyon luteolum) protein is DNA replication and repair protein RecF.